The sequence spans 236 residues: Lectin alpha chain (236 aa).

Residues glutamate 8 and aspartate 10 each contribute to the Mn(2+) site. Ca(2+)-binding residues include aspartate 10, tyrosine 12, asparagine 14, and aspartate 19. Tyrosine 12 contributes to the a carbohydrate binding site. Aspartate 19, histidine 24, and serine 34 together coordinate Mn(2+). Residue 99-100 (LY) coordinates a carbohydrate. Residue aspartate 207 coordinates Ca(2+). Arginine 227 is an a carbohydrate binding site.

It belongs to the leguminous lectin family. Equilibrium between homodimer and homotetramer. Oligomerization is pH-dependent with homotetramers forming at pH 6.5 and above. Post-translationally, the beta and gamma chains are produced by partial proteolytic processing of the lectin alpha chain by an asparaginyl endopeptidase. Mixture of 60% alpha lectin and 40% of its beta and gamma proteolytic fragments. As to expression, seed.

In terms of biological role, D-mannose/D-glucose-binding lectin. Has anti-inflammatory activity in rats. Induces histamine release in mast cells from rat. Induces lymphocyte proliferation and IFNG production. The chain is Lectin alpha chain from Cratylia argentea (Cratylia floribunda).